Reading from the N-terminus, the 234-residue chain is FAS1 domain-containing protein AFUA_8G05360 (234 aa).

The signal sequence occupies residues 1 to 21 (MRRTLFVLFVVAFCFIGSVIA). The FAS1 domain maps to 83–231 (KPVVSDVLPK…GELWILNSVL (149 aa)).

It localises to the vacuole. The sequence is that of FAS1 domain-containing protein AFUA_8G05360 from Aspergillus fumigatus (strain ATCC MYA-4609 / CBS 101355 / FGSC A1100 / Af293) (Neosartorya fumigata).